Reading from the N-terminus, the 77-residue chain is NAD(P)H-quinone oxidoreductase subunit L (77 aa).

Helical transmembrane passes span L10–G30 and L48–L68.

This sequence belongs to the complex I NdhL subunit family. NDH-1 can be composed of about 15 different subunits; different subcomplexes with different compositions have been identified which probably have different functions.

It is found in the cellular thylakoid membrane. It catalyses the reaction a plastoquinone + NADH + (n+1) H(+)(in) = a plastoquinol + NAD(+) + n H(+)(out). It carries out the reaction a plastoquinone + NADPH + (n+1) H(+)(in) = a plastoquinol + NADP(+) + n H(+)(out). Its function is as follows. NDH-1 shuttles electrons from an unknown electron donor, via FMN and iron-sulfur (Fe-S) centers, to quinones in the respiratory and/or the photosynthetic chain. The immediate electron acceptor for the enzyme in this species is believed to be plastoquinone. Couples the redox reaction to proton translocation, and thus conserves the redox energy in a proton gradient. Cyanobacterial NDH-1 also plays a role in inorganic carbon-concentration. This is NAD(P)H-quinone oxidoreductase subunit L from Picosynechococcus sp. (strain ATCC 27264 / PCC 7002 / PR-6) (Agmenellum quadruplicatum).